The chain runs to 218 residues: Deoxyribose-phosphate aldolase (218 aa).

The active-site Proton donor/acceptor is Asp89. Residue Lys152 is the Schiff-base intermediate with acetaldehyde of the active site. The active-site Proton donor/acceptor is the Lys182.

The protein belongs to the DeoC/FbaB aldolase family. DeoC type 1 subfamily.

The protein localises to the cytoplasm. It catalyses the reaction 2-deoxy-D-ribose 5-phosphate = D-glyceraldehyde 3-phosphate + acetaldehyde. It functions in the pathway carbohydrate degradation; 2-deoxy-D-ribose 1-phosphate degradation; D-glyceraldehyde 3-phosphate and acetaldehyde from 2-deoxy-alpha-D-ribose 1-phosphate: step 2/2. Catalyzes a reversible aldol reaction between acetaldehyde and D-glyceraldehyde 3-phosphate to generate 2-deoxy-D-ribose 5-phosphate. This Corynebacterium diphtheriae (strain ATCC 700971 / NCTC 13129 / Biotype gravis) protein is Deoxyribose-phosphate aldolase.